A 311-amino-acid polypeptide reads, in one-letter code: tRNA-cytidine(32) 2-sulfurtransferase (311 aa).

The PP-loop motif motif lies at 45–50; it reads SGGKDS. Positions 120, 123, and 211 each coordinate [4Fe-4S] cluster.

Belongs to the TtcA family. Homodimer. Mg(2+) serves as cofactor. The cofactor is [4Fe-4S] cluster.

The protein localises to the cytoplasm. It catalyses the reaction cytidine(32) in tRNA + S-sulfanyl-L-cysteinyl-[cysteine desulfurase] + AH2 + ATP = 2-thiocytidine(32) in tRNA + L-cysteinyl-[cysteine desulfurase] + A + AMP + diphosphate + H(+). It functions in the pathway tRNA modification. Catalyzes the ATP-dependent 2-thiolation of cytidine in position 32 of tRNA, to form 2-thiocytidine (s(2)C32). The sulfur atoms are provided by the cysteine/cysteine desulfurase (IscS) system. This is tRNA-cytidine(32) 2-sulfurtransferase from Shewanella halifaxensis (strain HAW-EB4).